A 466-amino-acid polypeptide reads, in one-letter code: Magnetosome-associated protein MamJ (466 aa).

2 disordered regions span residues 1 to 23 (MAKN…ISTG) and 60 to 80 (ANQG…RSQD). Residues 1–24 (MAKNRRDRGTDLPGDGDQKISTGP) are not required to restore magnetic response to deletion mutant. Positions 25-80 (EIVSVTVHPSPNLAAAAKPVQGDIWASLLESSPWSANQGGLVETAQPPSAPIRSQD) are required to restore magnetic response to deletion mutant. Tandem repeat unit repeat units follow at residues 81 to 168 (PVPV…VEPE) and 169 to 256 (PAPV…VEPE). Not required to restore magnetic response to deletion mutant stretches follow at residues 81-256 (PVPV…VEPE), 136-334 (ETDA…SQAE), 333-374 (AESV…AVEA), and 432-466 (VGSN…DKNK). 3 Glu-Pro-rich motif repeats span residues 145 to 164 (IEPE…EAAE), 233 to 252 (IEPE…EAAE), and 253 to 272 (VEPE…EAAE). 2 required to restore magnetic response to deletion mutant regions span residues 375-432 (TRQP…GRLV) and 426-466 (VKGG…DKNK).

Belongs to the magnetosome MamJ protein family. Forms homooligomers. Interacts with MamK. Identified by N-terminal sequencing of a protein that is about 96 kDa in size. The protein runs anomalously on protein gels.

It is found in the magnetosome. Its function is as follows. Required for assembly of magnetosome chains. Regulates the dynamic behavior of MamK filaments. May connect magnetosomes to MamK filaments. Moves from the cell poles towards midcell; movement does not depend on the treadmilling ability of MamK, suggesting MamJ associates and disassociates continuously from the MamK filament. This Magnetospirillum gryphiswaldense (strain DSM 6361 / JCM 21280 / NBRC 15271 / MSR-1) protein is Magnetosome-associated protein MamJ.